Here is a 412-residue protein sequence, read N- to C-terminus: 3,4-dihydroxybenzoate--[aryl-carrier protein] ligase (412 aa).

This sequence belongs to the ATP-dependent AMP-binding enzyme family.

The catalysed reaction is holo-[aryl-carrier protein] + 3,4-dihydroxybenzoate + ATP = 3,4-dihydroxybenzoyl-[aryl-carrier protein] + AMP + diphosphate. It catalyses the reaction 3,4-dihydroxybenzoate + ATP + H(+) = 3,4-dihydroxybenzoyl-5'-AMP + diphosphate. The enzyme catalyses 3,4-dihydroxybenzoyl-5'-AMP + holo-[aryl-carrier protein] = 3,4-dihydroxybenzoyl-[aryl-carrier protein] + AMP + H(+). The protein operates within siderophore biosynthesis; petrobactin biosynthesis. ATP-pyrophosphate exchange is inhibited in vitro by nonhydrolyzable acylsulfamate analogs that mimic the AsbC-bound intermediate 3,4-dihydroxybenzoyl-AMP. In terms of biological role, involved in the biosynthesis of petrobactin, a catecholate siderophore that functions in both iron acquisition and virulence. Catalyzes the adenylation of 3,4-dihydroxybenzoate (3,4-DHBA) to the corresponding AMP ester, followed by the transfer of the activated unit to the phosphopantetheine thiol of the aryl-carrier protein AsbD. In Bacillus anthracis, this protein is 3,4-dihydroxybenzoate--[aryl-carrier protein] ligase.